A 451-amino-acid polypeptide reads, in one-letter code: Epi-neemfruitin B 7-O-acetyltransferse L7AT (451 aa).

Catalysis depends on proton acceptor residues histidine 165 and aspartate 384.

The protein belongs to the plant acyltransferase family. In terms of assembly, monomer. As to expression, mainly expressed in petioles and, to a lower extent, in roots.

It carries out the reaction epi-neemfruitin B + acetyl-CoA = 7-acetyl-epi-neemfruitin B + CoA. It functions in the pathway secondary metabolite biosynthesis; terpenoid biosynthesis. Functionally, acetyltransferase involved in the biosynthesis of limonoids triterpene natural products such as azadirachtin, an antifeedant widely used as bioinsecticide, and possessing many medicinal applications including anti-tumoral, anti-malarial, anti-rheumatic, antibacterial, anti-inflammatory, anti-pyretic and diuretic effects. Catalyzes the formation of 7-acetyl-epi-neemfruitin B from epi-neemfruitin B. This chain is Epi-neemfruitin B 7-O-acetyltransferse L7AT, found in Melia azedarach (Chinaberry tree).